We begin with the raw amino-acid sequence, 405 residues long: Prenyltransferase phqA (405 aa).

Dimethylallyl diphosphate is bound by residues Y195, K262, and Q332.

It belongs to the tryptophan dimethylallyltransferase family.

It functions in the pathway alkaloid biosynthesis. Prenyltransferase; part of the gene cluster that mediates the biosynthesis of paraherquamide, a fungal indole alkaloid that belongs to a family of natural products containing a characteristic bicyclo[2.2.2]diazaoctane core. The first steps in the biosynthesis of paraherquamide is the production of the beta-methyl-proline precursor from L-isoleucine. They require oxidation of a terminally hydroxylated L-isoleucine to the corresponding aldehyde by enzymes which have still to be identified. Spontaneous cyclization and dehydration would yield the 4-methyl pyrolline-5-carboxylic acid, which is then reduced by the pyrroline-5-carboxylate reductase phqD leading to the beta-methyl-proline precursor. The next step of paraherquamide biosynthesis involves coupling of beta-methyl-proline and L-tryptophan by the bimodular NRPS phqB, to produce a monooxopiperazine intermediate. The reductase (R) domain of phqB utilizes NADPH for hydride transfer to reduce the thioester bond of the T domain-tethered linear dipeptide to a hemithioaminal intermediate, which spontaneously cleaves the C-S bond to release the aldehyde product. This compound undergoes spontaneous cyclization and dehydration to give a dienamine which is reverse prenylated at C-2 by the reverse prenyltransferase phqJ. The other prenyltransferase present in the cluster, phqI may be a redundant gene in the pathway. During biosynthetic assembly, the key step to produce the polycyclic core is catalyzed by the bifunctional reductase and intramolecular [4+2] Diels-Alderase, phqE, resulting in formation of the [2.2.2] diazaoctane intermediate preparaherquamide. Following formation of preparaherquamide, an indole 2,3-epoxidation-initiated pinacol-like rearrangement is catalyzed by the phqK FAD-dependent monooxygenase. The prenyltransferase phqA, the cytochrome P450 monooxygenase phqL, and the FAD-linked oxidoreductase phqH (or the cytochrome P450 monooxygenase phqM), are proposed to be involved in the formation of the pyran ring. The FAD-dependent monooxygenase phqK is likely responsible for generation of the spiro-oxindole, and the N-methylation is likely mediated by the phqN methyltransferase leading to the isolable natural product paraherquamide F. However, the order of these biosynthetic steps has still to be determined. In late-stage paraherquamide biosynthesis, the third P450 monooxygenase, phqO, is probably responsible for the C-14 hydroxylation, transforming paraherquamide F to paraherquamide G, and paraherquamide E to the final product paraherquamide A. The expansion from the 6-membered ring pyran (in paraherquamides F and G) to the 7-membered dioxepin ring (in paraherquamides A and E) represents a poorly understood but intriguing process that probably involves the 2-oxoglutarate-dependent dioxygenase phqC. Finally, the remaining members of the paraherquamide cluster, including phqI as well as phqM (or phqH), do not have a clearly prescribed role and appear to be redundant. This is Prenyltransferase phqA from Penicillium fellutanum.